Consider the following 91-residue polypeptide: MLEVWKKWNVRGVVQGVGFRHFVKNVARAIGVRGYVKNEDDGSVTIVAGGNDEQIKELFRRIMEGNGWSYISDYDEIDLPKQEYKDFHVEF.

The Acylphosphatase-like domain occupies 5–91 (WKKWNVRGVV…QEYKDFHVEF (87 aa)). Catalysis depends on residues Arg-20 and Asn-38.

Belongs to the acylphosphatase family.

It carries out the reaction an acyl phosphate + H2O = a carboxylate + phosphate + H(+). This chain is Acylphosphatase (acyP), found in Fervidobacterium nodosum (strain ATCC 35602 / DSM 5306 / Rt17-B1).